The primary structure comprises 224 residues: DNA mismatch repair protein MutH (224 aa).

This sequence belongs to the MutH family.

Its subcellular location is the cytoplasm. Its function is as follows. Sequence-specific endonuclease that cleaves unmethylated GATC sequences. It is involved in DNA mismatch repair. This chain is DNA mismatch repair protein MutH, found in Histophilus somni (strain 2336) (Haemophilus somnus).